The sequence spans 281 residues: Protein ZAR1-like 1.L (281 aa).

The 3CxxC-type zinc finger occupies Gln-183 to Gln-267.

The protein belongs to the ZAR1 family. In terms of assembly, component of a cytoplasmic ribonucleoprotein complex together with eif4enif1/4E-T and cpeb1. As to expression, expressed in oocytes.

The protein resides in the cytoplasm. Its subcellular location is the cytoplasmic ribonucleoprotein granule. MRNA-binding protein required for maternal mRNA storage, translation and degradation during oocyte maturation. Controls timing of meiosis during oogenesis. Probably promotes formation of some phase-separated membraneless compartment that stores maternal mRNAs in oocytes: acts by undergoing liquid-liquid phase separation upon binding to maternal mRNAs. Binds to the 3'-UTR of maternal mRNAs, inhibiting their translation. The sequence is that of Protein ZAR1-like 1.L from Xenopus laevis (African clawed frog).